The following is a 140-amino-acid chain: UPF0132 membrane protein MJ1527 (140 aa).

3 helical membrane passes run 40–60, 70–90, and 92–112; these read MEGV…LLLE, AMQS…VSAI, and IIGW…WIVG.

It belongs to the UPF0132 family.

Its subcellular location is the cell membrane. The protein is UPF0132 membrane protein MJ1527 of Methanocaldococcus jannaschii (strain ATCC 43067 / DSM 2661 / JAL-1 / JCM 10045 / NBRC 100440) (Methanococcus jannaschii).